Reading from the N-terminus, the 288-residue chain is ATP synthase gamma chain (288 aa).

Belongs to the ATPase gamma chain family. F-type ATPases have 2 components, CF(1) - the catalytic core - and CF(0) - the membrane proton channel. CF(1) has five subunits: alpha(3), beta(3), gamma(1), delta(1), epsilon(1). CF(0) has three main subunits: a, b and c.

The protein localises to the cell inner membrane. Functionally, produces ATP from ADP in the presence of a proton gradient across the membrane. The gamma chain is believed to be important in regulating ATPase activity and the flow of protons through the CF(0) complex. The sequence is that of ATP synthase gamma chain from Chromobacterium violaceum (strain ATCC 12472 / DSM 30191 / JCM 1249 / CCUG 213 / NBRC 12614 / NCIMB 9131 / NCTC 9757 / MK).